A 276-amino-acid chain; its full sequence is Large ribosomal subunit protein uL2 (276 aa).

Positions 221 to 276 (RGSVMNPNDHPHGGGEGRAPIGRKAPVTPWGKPTLGLKTRKKKNKSDQYIIRRRKK) are disordered.

It belongs to the universal ribosomal protein uL2 family. In terms of assembly, part of the 50S ribosomal subunit. Forms a bridge to the 30S subunit in the 70S ribosome.

Its function is as follows. One of the primary rRNA binding proteins. Required for association of the 30S and 50S subunits to form the 70S ribosome, for tRNA binding and peptide bond formation. It has been suggested to have peptidyltransferase activity; this is somewhat controversial. Makes several contacts with the 16S rRNA in the 70S ribosome. The sequence is that of Large ribosomal subunit protein uL2 from Brevibacillus brevis (strain 47 / JCM 6285 / NBRC 100599).